Here is a 276-residue protein sequence, read N- to C-terminus: Myoblast determination protein 1 homolog 1 (276 aa).

Residues 84–135 form the bHLH domain; it reads DRRKAATMRERRRLSKVNDAFETLKRCTSTNPNQRLPKVDILRNAISYIESL. Residues 228–253 are disordered; it reads CPAVQDGSEGSSPCSPGDGSIASENG.

Efficient DNA binding requires dimerization with another bHLH protein.

The protein localises to the nucleus. Functionally, may act as a transcriptional activator that promotes transcription of muscle-specific target genes and plays a role in muscle differentiation. The chain is Myoblast determination protein 1 homolog 1 (myod1) from Oncorhynchus mykiss (Rainbow trout).